Here is a 681-residue protein sequence, read N- to C-terminus: DNA-directed RNA polymerase subunit beta' (681 aa).

Zn(2+) is bound by residues Cys-69, Cys-71, Cys-87, and Cys-90. Mg(2+) is bound by residues Asp-489, Asp-491, and Asp-493.

This sequence belongs to the RNA polymerase beta' chain family. RpoC1 subfamily. As to quaternary structure, in plastids the minimal PEP RNA polymerase catalytic core is composed of four subunits: alpha, beta, beta', and beta''. When a (nuclear-encoded) sigma factor is associated with the core the holoenzyme is formed, which can initiate transcription. Mg(2+) is required as a cofactor. Requires Zn(2+) as cofactor.

The protein localises to the plastid. It localises to the chloroplast. The enzyme catalyses RNA(n) + a ribonucleoside 5'-triphosphate = RNA(n+1) + diphosphate. Functionally, DNA-dependent RNA polymerase catalyzes the transcription of DNA into RNA using the four ribonucleoside triphosphates as substrates. The chain is DNA-directed RNA polymerase subunit beta' from Anthoceros angustus (Hornwort).